A 502-amino-acid polypeptide reads, in one-letter code: tRNA-2-methylthio-N(6)-dimethylallyladenosine synthase (502 aa).

Residues 12 to 129 (RTYQVRTYGC…LPVLLERARH (118 aa)) enclose the MTTase N-terminal domain. Residues Cys-21, Cys-58, Cys-92, Cys-166, Cys-170, and Cys-173 each contribute to the [4Fe-4S] cluster site. Positions 152–383 (RESTYAGWVS…ACVEEITWAE (232 aa)) constitute a Radical SAM core domain. Residues 385–455 (RRLVGETVEV…PHHLNADGEP (71 aa)) form the TRAM domain. A disordered region spans residues 451–502 (ADGEPLAHRRTPAGDAAEAGRRPRTAGVSLGLPTVGAPPSPVPPAASSACAC).

The protein belongs to the methylthiotransferase family. MiaB subfamily. As to quaternary structure, monomer. [4Fe-4S] cluster is required as a cofactor.

Its subcellular location is the cytoplasm. The enzyme catalyses N(6)-dimethylallyladenosine(37) in tRNA + (sulfur carrier)-SH + AH2 + 2 S-adenosyl-L-methionine = 2-methylsulfanyl-N(6)-dimethylallyladenosine(37) in tRNA + (sulfur carrier)-H + 5'-deoxyadenosine + L-methionine + A + S-adenosyl-L-homocysteine + 2 H(+). Functionally, catalyzes the methylthiolation of N6-(dimethylallyl)adenosine (i(6)A), leading to the formation of 2-methylthio-N6-(dimethylallyl)adenosine (ms(2)i(6)A) at position 37 in tRNAs that read codons beginning with uridine. The sequence is that of tRNA-2-methylthio-N(6)-dimethylallyladenosine synthase from Salinispora arenicola (strain CNS-205).